Reading from the N-terminus, the 815-residue chain is Protein SMAX1-LIKE 3 (815 aa).

Residues 8–171 enclose the Clp R domain; it reads VEQALTADAA…TKVEQAVSLE (164 aa). 2 repeat regions span residues 12 to 80 and 99 to 171; these read LTAD…LNRL and ISNA…VSLE. The interval 750 to 769 is disordered; that stretch reads SRACSPPSNQKSDGSDQPED. The EAR signature appears at 778–782; that stretch reads LDLNL.

The protein belongs to the ClpA/ClpB family. As to quaternary structure, interacts probably with TPL/TPR in an EAR-motif dependent manner. As to expression, expressed in roots and seedlings.

In terms of biological role, may function in a transcriptional corepressor complex. In Arabidopsis thaliana (Mouse-ear cress), this protein is Protein SMAX1-LIKE 3.